Reading from the N-terminus, the 388-residue chain is Chaperone protein DnaJ 1 (388 aa).

Residues Asp-10–Arg-74 form the J domain. The CR-type zinc-finger motif lies at Gly-159 to Thr-237. Zn(2+) contacts are provided by Cys-172, Cys-175, Cys-189, Cys-192, Cys-211, Cys-214, Cys-225, and Cys-228. CXXCXGXG motif repeat units lie at residues Cys-172–Gly-179, Cys-189–Gly-196, Cys-211–Gly-218, and Cys-225–Gly-232.

Belongs to the DnaJ family. In terms of assembly, homodimer. It depends on Zn(2+) as a cofactor.

Its subcellular location is the cytoplasm. Functionally, participates actively in the response to hyperosmotic and heat shock by preventing the aggregation of stress-denatured proteins and by disaggregating proteins, also in an autonomous, DnaK-independent fashion. Unfolded proteins bind initially to DnaJ; upon interaction with the DnaJ-bound protein, DnaK hydrolyzes its bound ATP, resulting in the formation of a stable complex. GrpE releases ADP from DnaK; ATP binding to DnaK triggers the release of the substrate protein, thus completing the reaction cycle. Several rounds of ATP-dependent interactions between DnaJ, DnaK and GrpE are required for fully efficient folding. Also involved, together with DnaK and GrpE, in the DNA replication of plasmids through activation of initiation proteins. This Mycobacterium leprae (strain TN) protein is Chaperone protein DnaJ 1.